A 400-amino-acid chain; its full sequence is Eukaryotic translation initiation factor 3 subunit M (400 aa).

Residues 180–354 (LIAKIYSALV…QSFAVHRAQK (175 aa)) form the PCI domain.

The protein belongs to the eIF-3 subunit M family. Component of the eukaryotic translation initiation factor 3 (eIF-3) complex.

The protein localises to the cytoplasm. Its function is as follows. Component of the eukaryotic translation initiation factor 3 (eIF-3) complex, which is involved in protein synthesis of a specialized repertoire of mRNAs and, together with other initiation factors, stimulates binding of mRNA and methionyl-tRNAi to the 40S ribosome. The eIF-3 complex specifically targets and initiates translation of a subset of mRNAs involved in cell proliferation. This chain is Eukaryotic translation initiation factor 3 subunit M, found in Yarrowia lipolytica (strain CLIB 122 / E 150) (Yeast).